Consider the following 362-residue polypeptide: Peptide chain release factor 1 (362 aa).

Residue Q237 is modified to N5-methylglutamine.

It belongs to the prokaryotic/mitochondrial release factor family. In terms of processing, methylated by PrmC. Methylation increases the termination efficiency of RF1.

It localises to the cytoplasm. Its function is as follows. Peptide chain release factor 1 directs the termination of translation in response to the peptide chain termination codons UAG and UAA. The chain is Peptide chain release factor 1 from Marinomonas sp. (strain MWYL1).